The sequence spans 78 residues: Large ribosomal subunit protein bL28 (78 aa).

Residues 1 to 25 are disordered; that stretch reads MSRVCQVTGKRPAVGNNRSHAKNAT.

It belongs to the bacterial ribosomal protein bL28 family.

The chain is Large ribosomal subunit protein bL28 from Vibrio cholerae serotype O1 (strain ATCC 39541 / Classical Ogawa 395 / O395).